We begin with the raw amino-acid sequence, 318 residues long: Cytosolic Fe-S cluster assembly factor Nubp1 homolog (318 aa).

The segment covering 1 to 15 has biased composition (basic and acidic residues); the sequence is MSAPEVENKPADAPE. The tract at residues 1–29 is disordered; it reads MSAPEVENKPADAPEHCPGTESENAGKAS. [4Fe-4S] cluster-binding residues include Cys17, Cys31, Cys34, and Cys40. 70–77 is an ATP binding site; that stretch reads GKGGVGKS. Positions 245 and 248 each coordinate [4Fe-4S] cluster.

This sequence belongs to the Mrp/NBP35 ATP-binding proteins family. NUBP1/NBP35 subfamily. In terms of assembly, heterotetramer of 2 Nubp1 and 2 Nubp2 chains. It depends on [4Fe-4S] cluster as a cofactor.

The protein resides in the cytoplasm. Functionally, component of the cytosolic iron-sulfur (Fe/S) protein assembly (CIA) machinery. Required for maturation of extramitochondrial Fe-S proteins. The Nubp1-Nubp2 heterotetramer forms a Fe-S scaffold complex, mediating the de novo assembly of an Fe-S cluster and its transfer to target apoproteins. The sequence is that of Cytosolic Fe-S cluster assembly factor Nubp1 homolog from Aedes aegypti (Yellowfever mosquito).